The following is a 159-amino-acid chain: Crossover junction endodeoxyribonuclease RuvC (159 aa).

Active-site residues include Asp-7, Glu-67, and Asp-139. 3 residues coordinate Mg(2+): Asp-7, Glu-67, and Asp-139.

It belongs to the RuvC family. In terms of assembly, homodimer which binds Holliday junction (HJ) DNA. The HJ becomes 2-fold symmetrical on binding to RuvC with unstacked arms; it has a different conformation from HJ DNA in complex with RuvA. In the full resolvosome a probable DNA-RuvA(4)-RuvB(12)-RuvC(2) complex forms which resolves the HJ. Requires Mg(2+) as cofactor.

The protein localises to the cytoplasm. It carries out the reaction Endonucleolytic cleavage at a junction such as a reciprocal single-stranded crossover between two homologous DNA duplexes (Holliday junction).. Its function is as follows. The RuvA-RuvB-RuvC complex processes Holliday junction (HJ) DNA during genetic recombination and DNA repair. Endonuclease that resolves HJ intermediates. Cleaves cruciform DNA by making single-stranded nicks across the HJ at symmetrical positions within the homologous arms, yielding a 5'-phosphate and a 3'-hydroxyl group; requires a central core of homology in the junction. The consensus cleavage sequence is 5'-(A/T)TT(C/G)-3'. Cleavage occurs on the 3'-side of the TT dinucleotide at the point of strand exchange. HJ branch migration catalyzed by RuvA-RuvB allows RuvC to scan DNA until it finds its consensus sequence, where it cleaves and resolves the cruciform DNA. The polypeptide is Crossover junction endodeoxyribonuclease RuvC (Orientia tsutsugamushi (strain Ikeda) (Rickettsia tsutsugamushi)).